The chain runs to 312 residues: MSAAPQHVTVLLAEAVEALAIRPGGVYVDGTFGRGGHSRAILAKLDADGRLIAFDRDPRAIEVARALPDPRLTAVHAPFSAFAEELDRLGLEHVDGVLLDLGVSSPQLDEAARGMSFRFDAPLDMRMDTSRGQTVAQWLADASVAQITEVLRDYGEERFAYAIAKAIAAARAGGAVASTRQLAEIVEKAVRTREPGQHPATRSFQALRIFINQELEELSLVLPAAVERLKPGGRLVAISFHSLEDRIVKRFMRDESRPPQLPSRLPLRAAELPQPRLRLVGKSQRPGPGEVAANPRSRSAVMRVAERTGGAA.

S-adenosyl-L-methionine-binding positions include 35–37, D55, F79, D100, and Q107; that span reads GGH. Residues 279–312 form a disordered region; the sequence is LVGKSQRPGPGEVAANPRSRSAVMRVAERTGGAA.

It belongs to the methyltransferase superfamily. RsmH family.

The protein resides in the cytoplasm. It catalyses the reaction cytidine(1402) in 16S rRNA + S-adenosyl-L-methionine = N(4)-methylcytidine(1402) in 16S rRNA + S-adenosyl-L-homocysteine + H(+). Functionally, specifically methylates the N4 position of cytidine in position 1402 (C1402) of 16S rRNA. The chain is Ribosomal RNA small subunit methyltransferase H from Aromatoleum aromaticum (strain DSM 19018 / LMG 30748 / EbN1) (Azoarcus sp. (strain EbN1)).